Here is a 243-residue protein sequence, read N- to C-terminus: MKTLVIAHRGDSKNVPENTIAAFKRAMELGADGIELDVQLTKDGHLVVIHDETVDRTTNGEGFVKDFTLEEIKKLDAGIKFGEKFAGERIPTLYEVFELIGDKDFLVNIEIKSGIVLYPGIEEKLIKAIKEYNFEERVIISSFNHYSLRDVKKMAPHLKIGLLYQCGLVEPWHMALRMEAYSLHPFYFNIIPELVEGCKKNGVKLFPWTVDRKEDMERMIKAGVDGIITDDPETLINLVRKGG.

The 237-residue stretch at 3–239 (TLVIAHRGDS…DDPETLINLV (237 aa)) folds into the GP-PDE domain. His-8 serves as the catalytic Proton acceptor. Ca(2+) contacts are provided by Glu-35 and Asp-37. His-50 (proton donor) is an active-site residue. Glu-110 provides a ligand contact to Ca(2+).

It belongs to the glycerophosphoryl diester phosphodiesterase family. As to quaternary structure, homodimer. Requires Mg(2+) as cofactor. Ca(2+) serves as cofactor.

It carries out the reaction a sn-glycero-3-phosphodiester + H2O = an alcohol + sn-glycerol 3-phosphate + H(+). The catalysed reaction is sn-glycerol 3-phosphocholine + H2O = sn-glycerol 3-phosphate + choline + H(+). Inhibited by EDTA. In terms of biological role, glycerophosphodiester phosphodiesterase hydrolyzes glycerophosphodiesters into glycerol-3-phosphate (G3P) and the corresponding alcohol. Can use glycerophosphocholine. In Caldanaerobacter subterraneus subsp. tengcongensis (strain DSM 15242 / JCM 11007 / NBRC 100824 / MB4) (Thermoanaerobacter tengcongensis), this protein is Glycerophosphodiester phosphodiesterase.